Here is a 79-residue protein sequence, read N- to C-terminus: Small ribosomal subunit protein bS18 (79 aa).

This sequence belongs to the bacterial ribosomal protein bS18 family. As to quaternary structure, part of the 30S ribosomal subunit. Forms a tight heterodimer with protein bS6.

In terms of biological role, binds as a heterodimer with protein bS6 to the central domain of the 16S rRNA, where it helps stabilize the platform of the 30S subunit. The protein is Small ribosomal subunit protein bS18 of Pseudarthrobacter chlorophenolicus (strain ATCC 700700 / DSM 12829 / CIP 107037 / JCM 12360 / KCTC 9906 / NCIMB 13794 / A6) (Arthrobacter chlorophenolicus).